We begin with the raw amino-acid sequence, 1502 residues long: Heme-responsive zinc finger transcription factor HAP1 (1502 aa).

Over residues M1–S50 the composition is skewed to polar residues. The tract at residues M1–K56 is disordered. Zn(2+)-binding residues include C64, C67, C74, C81, C84, and C93. The zn(2)-C6 fungal-type DNA-binding region spans C64–C93. The stretch at E105–S134 forms a coiled coil. The tract at residues K126 to N208 is disordered. The segment covering K130–S142 has biased composition (low complexity). Composition is skewed to polar residues over residues Y143–F152 and T160–H176. A compositionally biased stretch (low complexity) spans Q177–N208. The heme-responsive; required for HMC formation stretch occupies residues K244–S444. 6 HRM repeats span residues K280–H285, K299–H304, K323–H328, R347–H352, K389–H394, and R415–H420. Composition is skewed to polar residues over residues S432–H447 and Q706–L734. 2 disordered regions span residues S432–H458 and Q706–Q767. Low complexity predominate over residues N735–N759. Residues K1192–Q1197 form an HRM 7 repeat. Residues T1384–S1411 form a disordered region. The span at D1388–S1411 shows a compositional bias: polar residues.

Binds DNA as a homodimer. Interacts with SRO9 and YDJ1. In the absence of heme, binds to at least four cellular proteins, including YDJ1 and SRO9, forming a high-molecular-weight complex (HMC) which results in repression of its activity and dictates its DNA-binding specificity.

Its subcellular location is the nucleus. Functionally, regulation of oxygen dependent gene expression. It modulates the expression of Iso-1 (CYP1) and Iso-2 (CYP3) cytochrome c. In response to heme, promotes transcription of genes encoding functions required for respiration, controlling oxidative damage and repression of anaerobic genes. Binds to the sequence 5'-CGGNNNTNNCGG-3'. Is non-functional in terms of iso-1 cytochrome c expression in strain S288c and its derivatives. This is Heme-responsive zinc finger transcription factor HAP1 (HAP1) from Saccharomyces cerevisiae (strain ATCC 204508 / S288c) (Baker's yeast).